The sequence spans 83 residues: Small ribosomal subunit protein bS16 (83 aa).

This sequence belongs to the bacterial ribosomal protein bS16 family.

The sequence is that of Small ribosomal subunit protein bS16 from Acinetobacter baumannii (strain AB307-0294).